A 1499-amino-acid polypeptide reads, in one-letter code: Tyrosine-protein phosphatase non-receptor type 23 (1499 aa).

Residues 1–219 (LNVNLMLGQA…AKIEDKNEVL (219 aa)) form the BRO1 domain. TPR repeat units lie at residues 75–108 (AVAH…LNEA) and 199–232 (EEKA…DPDT). Coiled-coil stretches lie at residues 278–305 (EASL…LGQA), 377–464 (KAVL…NVQY), and 506–537 (YADL…LLDR). Disordered stretches follow at residues 536–583 (DREL…MMAG) and 718–1006 (HMAL…LLQP). The interval 598 to 993 (HFSPGPFPGS…SSSPESQHGG (396 aa)) is his. Pro residues predominate over residues 724–752 (GPAPAPPQPCFPVPQPVPQSVPQPQPLPT). Polar residues predominate over residues 754–763 (YTYSIGTKQH). Position 785 is an omega-N-methylarginine (Arg-785). Composition is skewed to pro residues over residues 785-827 (RIGP…PQPQ), 856-866 (LTPPPPYPFTP), 900-909 (FPSPGPPHPH), and 934-972 (GPPP…PPPC). 20 tandem repeats follow at residues 788–789 (PQ), 790–791 (PP), 792–793 (PQ), 794–795 (LQ), 796–797 (PQ), 798–799 (PQ), 800–801 (PQ), 802–803 (PQ), 804–805 (PQ), 806–807 (PP), 808–809 (PQ), 810–811 (PQ), 812–813 (PQ), 814–815 (PQ), 816–817 (PQ), 818–819 (PQ), 820–821 (PQ), 822–823 (PQ), 824–825 (PQ), and 826–827 (PQ). The segment at 788-827 (PQPPPQLQPQPQPQPQPQPPPQPQPQPQPQPQPQPQPQPQ) is 20 X 2 AA approximate tandem repeats of P-Q. Phosphoserine occurs at positions 985 and 986. Position 994 is a phosphothreonine (Thr-994). Residues 1055 to 1315 (DAVWRELQEA…KFCHEALVRH (261 aa)) form the Tyrosine-protein phosphatase domain. Cys-1255 acts as the Phosphocysteine intermediate in catalysis. 2 disordered regions span residues 1322–1351 (RHGV…QDLV) and 1381–1499 (ASLP…LNKT). The span at 1335-1348 (MSVSQKSHLPQDSQ) shows a compositional bias: polar residues. Residues 1390-1419 (PGLPPASLPEPTPAPPSSPPPPSSPLPEPP) show a composition bias toward pro residues. Residues 1427–1450 (VPEAPSLGPPSSSLELLASLTPEA) are compositionally biased toward low complexity. Polar residues predominate over residues 1464 to 1473 (SKQNFLQAHN). The residue at position 1478 (Arg-1478) is an Omega-N-methylarginine. Over residues 1482–1499 (PTDDPLSLLDPLWTLNKT) the composition is skewed to low complexity.

It belongs to the protein-tyrosine phosphatase family. Non-receptor class subfamily. Interacts with GRAP2 and GRB2. Interacts with UBAP1 and CHMP4B. In terms of tissue distribution, ubiquitously expressed, with highest levels in brain, testis and kidney, and lowest levels in skeletal muscle.

The protein resides in the nucleus. It is found in the cytoplasm. Its subcellular location is the cytoplasmic vesicle. It localises to the endosome. The protein localises to the cytoskeleton. The protein resides in the cilium basal body. The enzyme catalyses O-phospho-L-tyrosyl-[protein] + H2O = L-tyrosyl-[protein] + phosphate. Its function is as follows. Plays a role in sorting of endocytic ubiquitinated cargos into multivesicular bodies (MVBs) via its interaction with the ESCRT-I complex (endosomal sorting complex required for transport I), and possibly also other ESCRT complexes. May act as a negative regulator of Ras-mediated mitogenic activity. Plays a role in ciliogenesis. In Rattus norvegicus (Rat), this protein is Tyrosine-protein phosphatase non-receptor type 23 (Ptpn23).